Here is a 153-residue protein sequence, read N- to C-terminus: Transcriptional repressor NrdR (153 aa).

The segment at 3–34 is a zinc-finger region; that stretch reads CPSCHHSGTRVLESRPVEEGRSIRRRRECEQC. The 91-residue stretch at 49–139 folds into the ATP-cone domain; it reads LIVVKKEGTR…VYRQFKDINV (91 aa).

The protein belongs to the NrdR family. The cofactor is Zn(2+).

In terms of biological role, negatively regulates transcription of bacterial ribonucleotide reductase nrd genes and operons by binding to NrdR-boxes. The polypeptide is Transcriptional repressor NrdR (Geobacillus kaustophilus (strain HTA426)).